Here is a 353-residue protein sequence, read N- to C-terminus: Nucleotide-binding protein sce5766 (353 aa).

Residue 27–34 (GLSGAGKS) participates in ATP binding. A GTP-binding site is contributed by 76–79 (DVRV). Positions 310–353 (SGVPSGVGEGMAGAPGVDLRLAQPGATPSEPRPASDTSVTGGER) are disordered. Polar residues predominate over residues 344 to 353 (SDTSVTGGER).

Belongs to the RapZ-like family.

In terms of biological role, displays ATPase and GTPase activities. This Sorangium cellulosum (strain So ce56) (Polyangium cellulosum (strain So ce56)) protein is Nucleotide-binding protein sce5766.